The sequence spans 472 residues: MADTNNKLKSGLGKITQIIGAVLDIKFAEGKLPEIYEAIKIKKNDGDTLVVEVAQHLGDDTVRCIAMGPTDGLVRGMDAEGTGAPISVPVGENTLGRMFNVLGNPIDEKEAPKNVEYYPIHRKAPAFEEQSTQTEILETGIKVVDLLCPYQKGGKIGLFGGAGVGKTVLIQELITNIATEHGGYSVFTGVGERTREGNDLYYEMIDSGVINKTTMVFGQMNEPPGARMRVGLTGLTMAEYFRDKSGKDVLLFIDNIFRFTQAGSEVSALLGRMPSAVGYQPTLQTEMGALQERITSTKNGSITSVQAVYVPADDLTDPAPATTFAHLDATTVLSRSIVELGIYPAVDPLESTSRMLDPRVVGEEHYKVARDVQEILQRYKELQDIIAILGMDELSEDDKLLVARARKIQRFLSQPFHVAEQFTGLPGRYVPVAETIQGFKEIIEGKHDDIPESYFLNAGNIDDVLARVKANK.

160 to 167 (GGAGVGKT) is an ATP binding site.

It belongs to the ATPase alpha/beta chains family. F-type ATPases have 2 components, CF(1) - the catalytic core - and CF(0) - the membrane proton channel. CF(1) has five subunits: alpha(3), beta(3), gamma(1), delta(1), epsilon(1). CF(0) has three main subunits: a(1), b(2) and c(9-12). The alpha and beta chains form an alternating ring which encloses part of the gamma chain. CF(1) is attached to CF(0) by a central stalk formed by the gamma and epsilon chains, while a peripheral stalk is formed by the delta and b chains.

It is found in the cell membrane. The enzyme catalyses ATP + H2O + 4 H(+)(in) = ADP + phosphate + 5 H(+)(out). Produces ATP from ADP in the presence of a proton gradient across the membrane. The catalytic sites are hosted primarily by the beta subunits. The polypeptide is ATP synthase subunit beta (Lachnoclostridium phytofermentans (strain ATCC 700394 / DSM 18823 / ISDg) (Clostridium phytofermentans)).